The sequence spans 337 residues: Histidine N-acetyltransferase (337 aa).

Positions 1–2 (MK) are cleaved as a propeptide — removed in mature form. The 136-residue stretch at 21–156 (LQFAVATEED…QGILLVRFRA (136 aa)) folds into the N-acetyltransferase domain.

The enzyme catalyses L-histidine + acetyl-CoA = N(alpha)-acetyl-L-histidine + CoA + H(+). Its function is as follows. Enzyme responsible for the N-acetyl-histidine (NAH) synthesis, which is a major constituent of brain and lens of ectothermic vertebrates. The sequence is that of Histidine N-acetyltransferase (hisat) from Scomber australasicus (Blue mackerel).